The sequence spans 443 residues: Ribosomal protein uS12 methylthiotransferase RimO (443 aa).

The region spanning 1–114 (MGFVSLGCPK…VMQAVHTHLP (114 aa)) is the MTTase N-terminal domain. [4Fe-4S] cluster is bound by residues Cys8, Cys44, Cys73, Cys145, Cys149, and Cys152. Residues 131–372 (LTPKHYAYLK…MEVAEEVSAR (242 aa)) enclose the Radical SAM core domain. Positions 375 to 443 (QRKVGQTLRV…ADGHDLWGAV (69 aa)) constitute a TRAM domain.

It belongs to the methylthiotransferase family. RimO subfamily. Requires [4Fe-4S] cluster as cofactor.

It is found in the cytoplasm. It carries out the reaction L-aspartate(89)-[ribosomal protein uS12]-hydrogen + (sulfur carrier)-SH + AH2 + 2 S-adenosyl-L-methionine = 3-methylsulfanyl-L-aspartate(89)-[ribosomal protein uS12]-hydrogen + (sulfur carrier)-H + 5'-deoxyadenosine + L-methionine + A + S-adenosyl-L-homocysteine + 2 H(+). In terms of biological role, catalyzes the methylthiolation of an aspartic acid residue of ribosomal protein uS12. This Cupriavidus necator (strain ATCC 17699 / DSM 428 / KCTC 22496 / NCIMB 10442 / H16 / Stanier 337) (Ralstonia eutropha) protein is Ribosomal protein uS12 methylthiotransferase RimO.